Consider the following 404-residue polypeptide: Argininosuccinate synthase (404 aa).

ATP-binding positions include 11–19 (AYSGGLDTS) and alanine 40. Tyrosine 92 and serine 97 together coordinate L-citrulline. Glycine 122 contacts ATP. L-aspartate is bound by residues threonine 124, asparagine 128, and aspartate 129. Position 128 (asparagine 128) interacts with L-citrulline. Residues arginine 132, serine 181, serine 190, glutamate 266, and tyrosine 278 each contribute to the L-citrulline site.

The protein belongs to the argininosuccinate synthase family. Type 1 subfamily. Homotetramer.

The protein resides in the cytoplasm. It carries out the reaction L-citrulline + L-aspartate + ATP = 2-(N(omega)-L-arginino)succinate + AMP + diphosphate + H(+). Its pathway is amino-acid biosynthesis; L-arginine biosynthesis; L-arginine from L-ornithine and carbamoyl phosphate: step 2/3. In Moritella abyssi, this protein is Argininosuccinate synthase.